Reading from the N-terminus, the 198-residue chain is FMN-dependent NADH:quinone oxidoreductase (198 aa).

92-95 is a binding site for FMN; that stretch reads MWNL.

Belongs to the azoreductase type 1 family. As to quaternary structure, homodimer. FMN serves as cofactor.

It carries out the reaction 2 a quinone + NADH + H(+) = 2 a 1,4-benzosemiquinone + NAD(+). The catalysed reaction is N,N-dimethyl-1,4-phenylenediamine + anthranilate + 2 NAD(+) = 2-(4-dimethylaminophenyl)diazenylbenzoate + 2 NADH + 2 H(+). Quinone reductase that provides resistance to thiol-specific stress caused by electrophilic quinones. In terms of biological role, also exhibits azoreductase activity. Catalyzes the reductive cleavage of the azo bond in aromatic azo compounds to the corresponding amines. This is FMN-dependent NADH:quinone oxidoreductase from Lachnoclostridium phytofermentans (strain ATCC 700394 / DSM 18823 / ISDg) (Clostridium phytofermentans).